Here is a 392-residue protein sequence, read N- to C-terminus: Na(+)/H(+) antiporter NhaA 2 (392 aa).

Helical transmembrane passes span 20–40 (FFAA…AALI), 61–81 (LSVS…LVGL), 99–119 (ALPG…YVAF), 127–147 (IGGW…VLSL), 158–178 (IFLS…IALF), 181–201 (SDLS…LVAL), 209–229 (LLPY…SGIH), 265–285 (VAFA…LSGI), 298–318 (VALG…ALAI), 336–356 (GVAA…ALAF), and 365–385 (EVKV…VVVL).

This sequence belongs to the NhaA Na(+)/H(+) (TC 2.A.33) antiporter family.

Its subcellular location is the cell inner membrane. It carries out the reaction Na(+)(in) + 2 H(+)(out) = Na(+)(out) + 2 H(+)(in). Functionally, na(+)/H(+) antiporter that extrudes sodium in exchange for external protons. The chain is Na(+)/H(+) antiporter NhaA 2 from Pseudomonas syringae pv. syringae (strain B728a).